A 277-amino-acid polypeptide reads, in one-letter code: 2-dehydro-3-deoxyphosphooctonate aldolase (277 aa).

The protein belongs to the KdsA family.

The protein localises to the cytoplasm. The catalysed reaction is D-arabinose 5-phosphate + phosphoenolpyruvate + H2O = 3-deoxy-alpha-D-manno-2-octulosonate-8-phosphate + phosphate. The protein operates within carbohydrate biosynthesis; 3-deoxy-D-manno-octulosonate biosynthesis; 3-deoxy-D-manno-octulosonate from D-ribulose 5-phosphate: step 2/3. It functions in the pathway bacterial outer membrane biogenesis; lipopolysaccharide biosynthesis. This is 2-dehydro-3-deoxyphosphooctonate aldolase from Brucella melitensis biotype 2 (strain ATCC 23457).